The primary structure comprises 112 residues: MAKGGFPGMGGGNMNNLIKQAQKFQKQMEDMQKEIENKEFTATVGGGAVSATVSGKKEITEIKIKPEVVDPDDVEMLQDLILSACNEALKKAEEETSGEMKKLTGGLNIPGL.

Over residues 93–102 (EEETSGEMKK) the composition is skewed to basic and acidic residues. A disordered region spans residues 93–112 (EEETSGEMKKLTGGLNIPGL).

Belongs to the YbaB/EbfC family. As to quaternary structure, homodimer.

It localises to the cytoplasm. Its subcellular location is the nucleoid. Binds to DNA and alters its conformation. May be involved in regulation of gene expression, nucleoid organization and DNA protection. The chain is Nucleoid-associated protein CA_C0126 from Clostridium acetobutylicum (strain ATCC 824 / DSM 792 / JCM 1419 / IAM 19013 / LMG 5710 / NBRC 13948 / NRRL B-527 / VKM B-1787 / 2291 / W).